A 263-amino-acid polypeptide reads, in one-letter code: Interleukin-22 receptor subunit alpha-2 (263 aa).

Residues 1 to 21 form the signal peptide; it reads MMPKHCFLGFLISFFLTGVAG. 3 Fibronectin type-III domains span residues 26 to 68, 100 to 161, and 162 to 263; these read HESL…KIMF, GQRQ…TKID, and PPVM…VEIP. N-linked (GlcNAc...) asparagine glycosylation occurs at Asn56. A disulfide bridge links Cys110 with Cys118. N-linked (GlcNAc...) asparagine glycans are attached at residues Asn166, Asn171, Asn192, and Asn209. Cys238 and Cys259 are disulfide-bonded.

The protein belongs to the type II cytokine receptor family. As to expression, expressed in placenta, spleen, breast, skin and lung. Also detected in intestinal tract, testis, brain, heart and thymus. No expression found in prostate, bladder, kidney, ovary, muscle, bone marrow, liver and uterus. Isoform 1 is expressed only in placenta. Isoform 2 is expressed in placenta and breast and at lower level in spleen, skin, thymus and stomach.

It localises to the secreted. Its function is as follows. Isoform 2 is a receptor for IL22. Binds to IL22, prevents interaction with the functional IL-22R complex and blocks the activity of IL22 (in vitro). May play an important role as an IL22 antagonist in the regulation of inflammatory responses. In terms of biological role, isoform 1 may play a role in establishing and maintaining successful pregnancy. The chain is Interleukin-22 receptor subunit alpha-2 (IL22RA2) from Homo sapiens (Human).